A 758-amino-acid polypeptide reads, in one-letter code: 1-phosphatidylinositol 4,5-bisphosphate phosphodiesterase delta-4 (758 aa).

The 109-residue stretch at 16-124 (QLMQAGSPMR…WIQGLEKLIE (109 aa)) folds into the PH domain. Residues 26–53 (KVKSRSWKKQRYFKLQEDCMTIWYNSKK) form a substrate binding region. 3 EF-hand domains span residues 134-169 (LMDQWICDWFQKADKNKDGRMNFKEVQDLLKMMNVD), 170-205 (MSEHHAFRLFQMADKSESGTLEGEEFVLFYKALTQR), and 206-237 (DEVLKIFQDFSKDGKKLTLLEFVDFLQQGQLE). Ca(2+) contacts are provided by D147, N149, D151, R153, E158, D183, S185, S187, T189, and E194. A GBA motif is present at residues 213 to 243 (QDFSKDGKKLTLLEFVDFLQQGQLEEENTEE). One can recognise a PI-PLC X-box domain in the interval 290–435 (QDMMQPLCHY…LRGKILLKGK (146 aa)). H305 is an active-site residue. Ca(2+) contacts are provided by N306, E335, and D337. H350 is a catalytic residue. E384 lines the Ca(2+) pocket. Residues K433 and K435 each contribute to the substrate site. Over residues 446–468 (EQPDDSLGEVSDEEENIEVEEER) the composition is skewed to acidic residues. The disordered stretch occupies residues 446–479 (EQPDDSLGEVSDEEENIEVEEERNEDKKRAKKSK). Positions 486-602 (LSDCVIYCKS…GYVLKPSFMR (117 aa)) constitute a PI-PLC Y-box domain. Positions 515 and 542 each coordinate substrate. In terms of domain architecture, C2 spans 602–731 (RHVETTFNPD…SGYRHIHLLS (130 aa)). 6 residues coordinate Ca(2+): I645, D647, N671, D700, Y701, and D702. The PDZ-binding motif lies at 726-729 (HIHL).

It depends on Ca(2+) as a cofactor.

Its subcellular location is the membrane. It is found in the nucleus. The protein localises to the cytoplasm. It localises to the endoplasmic reticulum. It catalyses the reaction a 1,2-diacyl-sn-glycero-3-phospho-(1D-myo-inositol-4,5-bisphosphate) + H2O = 1D-myo-inositol 1,4,5-trisphosphate + a 1,2-diacyl-sn-glycerol + H(+). It carries out the reaction a 1,2-diacyl-sn-glycero-3-phospho-(1D-myo-inositol) + H2O = 1D-myo-inositol 1-phosphate + a 1,2-diacyl-sn-glycerol + H(+). Hydrolyzes the phosphatidylinositol 4,5-bisphosphate (PIP2) to generate 2 second messenger molecules diacylglycerol (DAG) and inositol 1,4,5-trisphosphate (IP3). DAG mediates the activation of protein kinase C (PKC), while IP3 releases Ca(2+) from intracellular stores. In Xenopus laevis (African clawed frog), this protein is 1-phosphatidylinositol 4,5-bisphosphate phosphodiesterase delta-4 (plcd4).